A 205-amino-acid chain; its full sequence is MFEYVTGYVEYVGPEYVVIDHNGIGYQIFTPNPYVFQRSKQEIRVYTYHYVREDIMALYGFKTREERLLFTKLLGVSGIGPKGALAILASGQTGQVVQAIEHEDEKFLVKFPGVGKKTARQMILDLKGKLADVVPDAFVDLFSDTERFDEKKGTSAELDEALEALRALGYAEREVSRVVPELLKESLTTDQYIKKALSLLLNGKR.

Residues 1-62 (MFEYVTGYVE…EDIMALYGFK (62 aa)) form a domain I region. Residues 63–141 (TREERLLFTK…DVVPDAFVDL (79 aa)) form a domain II region. The flexible linker stretch occupies residues 142 to 152 (FSDTERFDEKK). Positions 153-205 (GTSAELDEALEALRALGYAEREVSRVVPELLKESLTTDQYIKKALSLLLNGKR) are domain III.

The protein belongs to the RuvA family. Homotetramer. Forms an RuvA(8)-RuvB(12)-Holliday junction (HJ) complex. HJ DNA is sandwiched between 2 RuvA tetramers; dsDNA enters through RuvA and exits via RuvB. An RuvB hexamer assembles on each DNA strand where it exits the tetramer. Each RuvB hexamer is contacted by two RuvA subunits (via domain III) on 2 adjacent RuvB subunits; this complex drives branch migration. In the full resolvosome a probable DNA-RuvA(4)-RuvB(12)-RuvC(2) complex forms which resolves the HJ.

It is found in the cytoplasm. Functionally, the RuvA-RuvB-RuvC complex processes Holliday junction (HJ) DNA during genetic recombination and DNA repair, while the RuvA-RuvB complex plays an important role in the rescue of blocked DNA replication forks via replication fork reversal (RFR). RuvA specifically binds to HJ cruciform DNA, conferring on it an open structure. The RuvB hexamer acts as an ATP-dependent pump, pulling dsDNA into and through the RuvAB complex. HJ branch migration allows RuvC to scan DNA until it finds its consensus sequence, where it cleaves and resolves the cruciform DNA. The chain is Holliday junction branch migration complex subunit RuvA from Bacillus cereus (strain G9842).